A 389-amino-acid chain; its full sequence is Mannitol-1-phosphate 5-dehydrogenase (389 aa).

5–16 (AVHFGAGNIGRG) is an NAD(+) binding site. Residue Lys215 is part of the active site.

Belongs to the mannitol dehydrogenase family. As to quaternary structure, monomer.

The catalysed reaction is D-mannitol 1-phosphate + NAD(+) = beta-D-fructose 6-phosphate + NADH + H(+). Catalyzes the NAD(H)-dependent interconversion of D-fructose 6-phosphate and D-mannitol 1-phosphate in the mannitol metabolic pathway. This Sclerotinia sclerotiorum (strain ATCC 18683 / 1980 / Ss-1) (White mold) protein is Mannitol-1-phosphate 5-dehydrogenase.